We begin with the raw amino-acid sequence, 601 residues long: Potassium voltage-gated channel subfamily A member 5 (601 aa).

The tract at residues 1–200 (MEIALVPLEN…FYQLGDEAME (200 aa)) is tetramerization domain. Residues 1–236 (MEIALVPLEN…LIFEYPESSG (236 aa)) lie on the Cytoplasmic side of the membrane. Residues 19 to 93 (GGEAGTGCSQ…DEEGEGDPAL (75 aa)) are disordered. Over residues 65-74 (RPLPPLPQDP) the composition is skewed to pro residues. Lysine 210 is covalently cross-linked (Glycyl lysine isopeptide (Lys-Gly) (interchain with G-Cter in SUMO)). The chain crosses the membrane as a helical span at residues 237–258 (SARGIAIVSVLVILISIITFCL). Over 259 to 312 (ETLPEFRDERELLRHPPVPHQPLGPSRGANGSGPLAPPSGPTVAPLLPRTLADP) the chain is Extracellular. Residues 275–297 (PVPHQPLGPSRGANGSGPLAPPS) are disordered. Asparagine 288 carries N-linked (GlcNAc...) asparagine glycosylation. Residues 313–334 (FFIVETTCVIWFTFELLVRFFA) form a helical membrane-spanning segment. Residue cysteine 335 is the site of S-palmitoyl cysteine attachment. Residues 335–345 (CPSKAEFSRNI) lie on the Cytoplasmic side of the membrane. A helical transmembrane segment spans residues 346-366 (MNIIDVVAIFPYFITLGTELA). The Extracellular segment spans residues 367 to 383 (EQPGGGGGGQNGQQAMS). Residues 384 to 404 (LAILRVIRLVRVFRIFKLSRH) traverse the membrane as a helical; Voltage-sensor segment. The Cytoplasmic segment spans residues 405–419 (SKGLQILGKTLQASM). Residues 406–419 (KGLQILGKTLQASM) form an S4-S5 linker region. Residues 420–441 (RELGLLIFFLFIGVILFSSAVY) form a helical membrane-spanning segment. Topologically, residues 442 to 455 (FAEADNQETHFSSI) are extracellular. Positions 456 to 467 (PDAFWWAVVTMT) form an intramembrane region, helical. A Selectivity filter motif is present at residues 468-473 (TVGYGD). The stretch at 468–475 (TVGYGDMR) is an intramembrane region. The Extracellular segment spans residues 476-482 (PVTVGGK). Residues 483 to 511 (IVGSLCAIAGVLTIALPVPVIVSNFNYFY) traverse the membrane as a helical segment. Residues 512–601 (HRETDHEEQA…CLDTSRETDL (90 aa)) are Cytoplasmic-facing. The segment at 521–545 (AALKEEQGSQSHGTGLDSGGPRKAS) is disordered. Residue lysine 524 forms a Glycyl lysine isopeptide (Lys-Gly) (interchain with G-Cter in SUMO) linkage. Residues 599–601 (TDL) carry the PDZ-binding motif.

This sequence belongs to the potassium channel family. A (Shaker) (TC 1.A.1.2) subfamily. Kv1.5/KCNA5 sub-subfamily. In terms of assembly, homotetramer and heterotetramer of potassium channel proteins. Interacts with DLG1, which enhances channel currents. Forms a ternary complex with DLG1 and CAV3. Interacts with KCNAB1. Interacts with UBE2I. Interacts with XIRP2; the interaction is required for normal action potential configuration in the heart. Glycosylated. In terms of processing, sumoylated on Lys-210, and Lys-524, preferentially with SUMO3. Sumoylation regulates the voltage sensitivity of the channel.

It is found in the cell membrane. The catalysed reaction is K(+)(in) = K(+)(out). Functionally, voltage-gated potassium channel that mediates transmembrane potassium transport in excitable membranes. Forms tetrameric potassium-selective channels through which potassium ions pass in accordance with their electrochemical gradient. The channel alternates between opened and closed conformations in response to the voltage difference across the membrane. Can form functional homotetrameric channels and heterotetrameric channels that contain variable proportions of KCNA1, KCNA2, KCNA4, KCNA5, and possibly other family members as well; channel properties depend on the type of alpha subunits that are part of the channel. Channel properties are modulated by cytoplasmic beta subunits that regulate the subcellular location of the alpha subunits and promote rapid inactivation. Homotetrameric channels display rapid activation and slow inactivation. Required for normal electrical conduction including formation of the infranodal ventricular conduction system and normal action potential configuration, as a result of its interaction with XIRP2. May play a role in regulating the secretion of insulin in normal pancreatic islets. The chain is Potassium voltage-gated channel subfamily A member 5 (KCNA5) from Mustela putorius furo (European domestic ferret).